We begin with the raw amino-acid sequence, 282 residues long: D-alanine aminotransferase (282 aa).

Tyr-32 is a substrate binding site. A pyridoxal 5'-phosphate-binding site is contributed by Arg-51. Residues Arg-99 and His-101 each coordinate substrate. The active-site Proton acceptor is Lys-146. N6-(pyridoxal phosphate)lysine is present on Lys-146. Pyridoxal 5'-phosphate is bound at residue Glu-178.

The protein belongs to the class-IV pyridoxal-phosphate-dependent aminotransferase family. Homodimer. Pyridoxal 5'-phosphate is required as a cofactor.

The catalysed reaction is D-alanine + 2-oxoglutarate = D-glutamate + pyruvate. Functionally, acts on the D-isomers of alanine, leucine, aspartate, glutamate, aminobutyrate, norvaline and asparagine. The enzyme transfers an amino group from a substrate D-amino acid to the pyridoxal phosphate cofactor to form pyridoxamine and an alpha-keto acid in the first half-reaction. The second half-reaction is the reverse of the first, transferring the amino group from the pyridoxamine to a second alpha-keto acid to form the product D-amino acid via a ping-pong mechanism. This is an important process in the formation of D-alanine and D-glutamate, which are essential bacterial cell wall components. The protein is D-alanine aminotransferase (dat) of Staphylococcus aureus (strain COL).